The following is a 511-amino-acid chain: Histidine ammonia-lyase (511 aa).

Residues 142 to 144 (ASG) constitute a cross-link (5-imidazolinone (Ala-Gly)). 2,3-didehydroalanine (Ser) is present on serine 143.

Belongs to the PAL/histidase family. Post-translationally, contains an active site 4-methylidene-imidazol-5-one (MIO), which is formed autocatalytically by cyclization and dehydration of residues Ala-Ser-Gly.

Its subcellular location is the cytoplasm. The enzyme catalyses L-histidine = trans-urocanate + NH4(+). It functions in the pathway amino-acid degradation; L-histidine degradation into L-glutamate; N-formimidoyl-L-glutamate from L-histidine: step 1/3. This is Histidine ammonia-lyase from Phenylobacterium zucineum (strain HLK1).